A 410-amino-acid polypeptide reads, in one-letter code: Neuroserpin (410 aa).

Residues 1 to 16 (MAFLGLFSLLVLQSMA) form the signal peptide. 3 N-linked (GlcNAc...) asparagine glycosylation sites follow: Asn-157, Asn-321, and Asn-401. Ser-403 is a glycosylation site (O-linked (Xyl...) (chondroitin sulfate) serine).

This sequence belongs to the serpin family. In terms of assembly, monomer. Has a tendency to form large polymers already at 41 and 45 degrees Celsius (in vitro). Detected in brain cortex and hippocampus pyramidal neurons (at protein level). Detected in cerebrospinal fluid (at protein level). Predominantly expressed in the brain.

It is found in the secreted. It localises to the cytoplasmic vesicle. Its subcellular location is the secretory vesicle lumen. The protein localises to the perikaryon. Functionally, serine protease inhibitor that inhibits plasminogen activators and plasmin but not thrombin. May be involved in the formation or reorganization of synaptic connections as well as for synaptic plasticity in the adult nervous system. May protect neurons from cell damage by tissue-type plasminogen activator. The sequence is that of Neuroserpin (SERPINI1) from Homo sapiens (Human).